The following is an 874-amino-acid chain: Cellulose synthase catalytic subunit [UDP-forming] (874 aa).

Helical transmembrane passes span 30 to 50 (SPFS…VFPL), 151 to 171 (ILGV…TQPF), 173 to 193 (PLSQ…VRRM), and 230 to 250 (LVCG…LVLG). Residues 271–364 (QWPTVDIFVP…FVAIFDCDHV (94 aa)) form a catalytic subdomain A region. Asp-313 is a catalytic residue. The substrate site is built by Asp-360 and Asp-362. A catalytic subdomain B region spans residues 441–501 (KPLDEIGGIA…GQRIRWARGM (61 aa)). Asp-457 is a catalytic residue. The next 5 membrane-spanning stretches (helical) occupy residues 525 to 545 (LNAM…TAPL), 547 to 567 (FLLL…LFVI), 592 to 612 (IYET…LINP), 634 to 654 (VISR…AAGV), and 668 to 688 (VIVS…AVAV). The PilZ domain maps to 694–790 (QVRRAHRVEI…QHIDFVQCTF (97 aa)). Residues 833 to 853 (SVKVIFRSLTALIAWIVSFIP) form a helical membrane-spanning segment.

The protein belongs to the glycosyltransferase 2 family. Mg(2+) serves as cofactor.

The protein resides in the cell inner membrane. It carries out the reaction [(1-&gt;4)-beta-D-glucosyl](n) + UDP-alpha-D-glucose = [(1-&gt;4)-beta-D-glucosyl](n+1) + UDP + H(+). Its pathway is glycan metabolism; bacterial cellulose biosynthesis. With respect to regulation, activated by bis-(3'-5') cyclic diguanylic acid (c-di-GMP). Functionally, catalytic subunit of cellulose synthase. It polymerizes uridine 5'-diphosphate glucose to cellulose, which is produced as an extracellular component for mechanical and chemical protection at the onset of the stationary phase, when the cells exhibit multicellular behavior (rdar morphotype). Coexpression of cellulose and thin aggregative fimbriae leads to a hydrophobic network with tightly packed cells embedded in a highly inert matrix. This Salmonella typhi protein is Cellulose synthase catalytic subunit [UDP-forming] (bcsA).